A 420-amino-acid chain; its full sequence is Transcriptional adapter 2-beta (420 aa).

Residues 4 to 59 form a ZZ-type zinc finger; it reads LGKKYCVYCLAEVSPLRFRCTECQDIELCPECFSAGAEIGHHRRYHGYQLVDGGRF. 8 residues coordinate Zn(2+): C9, C12, C23, C26, C32, C35, H45, and H49. The region spanning 65–118 is the SANT domain; sequence EAEGGWTSREEQLLLDAIEQFGFGNWEDMAAHVGASRTPQEVMEHYVSMYIHGN. Residues 305–335 form a disordered region; the sequence is SAEYEAARHKREKRKENKNLAGSKRGKEDGK.

As to quaternary structure, interacts with GCN5L2, SMARCA4, SMARCE1 and PAX5. Component of the TFTC-HAT complex.

Its subcellular location is the nucleus. In terms of biological role, coactivates PAX5-dependent transcription together with either SMARCA4 or GCN5L2. The chain is Transcriptional adapter 2-beta (TADA2B) from Homo sapiens (Human).